Reading from the N-terminus, the 154-residue chain is Aspartate carbamoyltransferase regulatory chain (154 aa).

Residues Cys109, Cys114, Cys138, and Cys141 each contribute to the Zn(2+) site.

Belongs to the PyrI family. As to quaternary structure, contains catalytic and regulatory chains. Requires Zn(2+) as cofactor.

Involved in allosteric regulation of aspartate carbamoyltransferase. This Yersinia pseudotuberculosis serotype O:1b (strain IP 31758) protein is Aspartate carbamoyltransferase regulatory chain.